Consider the following 406-residue polypeptide: LIM/homeobox protein Lhx1 (406 aa).

2 LIM zinc-binding domains span residues 4-54 and 63-117; these read CAGC…CKND and CAGC…CKED. Disordered stretches follow at residues 128 to 187 and 293 to 374; these read NSLH…RTTI and YDFF…EVFG. The segment covering 137–148 has biased composition (low complexity); sequence SDPSLSPDSQDP. Positions 151–167 are enriched in basic and acidic residues; it reads DDAKDSESANVSDKEAG. At Ser162 the chain carries Phosphoserine. Residues 180–239 constitute a DNA-binding region (homeobox); that stretch reads RRGPRTTIKAKQLETLKAAFAATPKPTRHIREQLAQETGLNMRVIQVWFQNRRSKERRMK. Over residues 315–327 the composition is skewed to low complexity; it reads PSSGPSGTPLGGL. Residues 352 to 362 are compositionally biased toward pro residues; sequence GDSPSPEPSLP.

Interacts with LDB1 via the tandem LIM domains. As to expression, expressed in the brain, thymus, and tonsils. Expressed in samples from patients with chronic myeloid leukemia (CML) and in 58% of acute myeloid leukemia (AML) cell lines.

The protein localises to the nucleus. In terms of biological role, potential transcription factor. May play a role in early mesoderm formation and later in lateral mesoderm differentiation and neurogenesis. The polypeptide is LIM/homeobox protein Lhx1 (LHX1) (Homo sapiens (Human)).